A 90-amino-acid polypeptide reads, in one-letter code: Probable Fe(2+)-trafficking protein (90 aa).

This sequence belongs to the Fe(2+)-trafficking protein family. Monomer.

Its function is as follows. Could be a mediator in iron transactions between iron acquisition and iron-requiring processes, such as synthesis and/or repair of Fe-S clusters in biosynthetic enzymes. The chain is Probable Fe(2+)-trafficking protein from Enterobacter sp. (strain 638).